The sequence spans 326 residues: Cathepsin L-like proteinase (326 aa).

An N-terminal signal peptide occupies residues 1-15; that stretch reads MRLFILAVLTVGVLG. Residues 16–106 constitute a propeptide, activation peptide; that stretch reads SNDDLWHQWK…HGVPYEANNR (91 aa). P109 carries the post-translational modification 3-hydroxyproline; partial. 3 cysteine pairs are disulfide-bonded: C129–C172, C163–C204, and C262–C311. The active site involves C132. P196 is modified (3-hydroxyproline; partial). Active-site residues include H269 and N289.

It belongs to the peptidase C1 family. As to quaternary structure, monomer. In terms of processing, contains cysteine residues involved in intramolecular disulfide bonding.

The protein resides in the secreted. With respect to regulation, strongly inhibited by Antipain, E64 and Leupeptin, and weakly inhibited by iodoacetic acid (IAA) and phenylmethylsulfonyl fluoride (PMSF). Requires the presence of dithiothreitol (DTT) for activity. Thiol protease. Probably involved in interaction with host tissues. Displays a similar activity to that of papain. Has high activity on Z-Phe-Arg-NHMec, but no activity on Z-Arg-NHMec. In Fasciola hepatica (Liver fluke), this protein is Cathepsin L-like proteinase.